Consider the following 302-residue polypeptide: Sulfate adenylyltransferase subunit 2 (302 aa).

The interval 280–302 is disordered; that stretch reads RQGRLIDSDQSASMEQKKRQGYF.

Belongs to the PAPS reductase family. CysD subfamily. As to quaternary structure, heterodimer composed of CysD, the smaller subunit, and CysN.

It carries out the reaction sulfate + ATP + H(+) = adenosine 5'-phosphosulfate + diphosphate. It functions in the pathway sulfur metabolism; hydrogen sulfide biosynthesis; sulfite from sulfate: step 1/3. Functionally, with CysN forms the ATP sulfurylase (ATPS) that catalyzes the adenylation of sulfate producing adenosine 5'-phosphosulfate (APS) and diphosphate, the first enzymatic step in sulfur assimilation pathway. APS synthesis involves the formation of a high-energy phosphoric-sulfuric acid anhydride bond driven by GTP hydrolysis by CysN coupled to ATP hydrolysis by CysD. The chain is Sulfate adenylyltransferase subunit 2 from Shewanella baltica (strain OS185).